Consider the following 70-residue polypeptide: Protein SlyX homolog (70 aa).

Belongs to the SlyX family.

This is Protein SlyX homolog from Shewanella loihica (strain ATCC BAA-1088 / PV-4).